A 406-amino-acid polypeptide reads, in one-letter code: Tyrosine--tRNA ligase (406 aa).

Y35 is an L-tyrosine binding site. The short motif at 40–49 (ATSTSLHIGH) is the 'HIGH' region element. Positions 166 and 170 each coordinate L-tyrosine. The 'KMSKS' region motif lies at 226 to 230 (KMGKS). K229 contributes to the ATP binding site. The S4 RNA-binding domain maps to 341 to 405 (ILLIDLMVLS…IGKKRILRVI (65 aa)).

It belongs to the class-I aminoacyl-tRNA synthetase family. TyrS type 1 subfamily. In terms of assembly, homodimer.

It localises to the cytoplasm. The enzyme catalyses tRNA(Tyr) + L-tyrosine + ATP = L-tyrosyl-tRNA(Tyr) + AMP + diphosphate + H(+). Catalyzes the attachment of tyrosine to tRNA(Tyr) in a two-step reaction: tyrosine is first activated by ATP to form Tyr-AMP and then transferred to the acceptor end of tRNA(Tyr). The sequence is that of Tyrosine--tRNA ligase from Borrelia turicatae (strain 91E135).